Here is a 105-residue protein sequence, read N- to C-terminus: Large ribosomal subunit protein uL24 (105 aa).

Belongs to the universal ribosomal protein uL24 family. In terms of assembly, part of the 50S ribosomal subunit.

Functionally, one of two assembly initiator proteins, it binds directly to the 5'-end of the 23S rRNA, where it nucleates assembly of the 50S subunit. Its function is as follows. One of the proteins that surrounds the polypeptide exit tunnel on the outside of the subunit. This Sphingopyxis alaskensis (strain DSM 13593 / LMG 18877 / RB2256) (Sphingomonas alaskensis) protein is Large ribosomal subunit protein uL24.